Consider the following 191-residue polypeptide: Lipid A acyltransferase PagP (191 aa).

A signal peptide spans 1-26; it reads MLKVNKYVILIIAFVSQMMFSTTAQA. Catalysis depends on residues histidine 63, aspartate 106, and serine 107.

It belongs to the lipid A palmitoyltransferase family. In terms of assembly, homodimer.

The protein resides in the cell outer membrane. It catalyses the reaction a lipid A + a 1,2-diacyl-sn-glycero-3-phosphocholine = a hepta-acyl lipid A + a 2-acyl-sn-glycero-3-phosphocholine. The catalysed reaction is a lipid IVA + a 1,2-diacyl-sn-glycero-3-phosphocholine = a lipid IVB + a 2-acyl-sn-glycero-3-phosphocholine. The enzyme catalyses a lipid IIA + a 1,2-diacyl-sn-glycero-3-phosphocholine = a lipid IIB + a 2-acyl-sn-glycero-3-phosphocholine. In terms of biological role, transfers a fatty acid residue from the sn-1 position of a phospholipid to the N-linked hydroxyfatty acid chain on the proximal unit of lipid A or its precursors. This chain is Lipid A acyltransferase PagP, found in Enterobacter lignolyticus (strain SCF1).